The chain runs to 165 residues: Transcription factor E (165 aa).

Positions 5–87 (NDPVVRGYLL…LWQLDLSDIE (83 aa)) constitute an HTH TFE/IIEalpha-type domain.

It belongs to the TFE family. As to quaternary structure, monomer. Interaction with RNA polymerase subunits RpoF and RpoE is necessary for Tfe stimulatory transcription activity. Able to interact with Tbp and RNA polymerase in the absence of DNA promoter. Interacts both with the preinitiation and elongation complexes.

In terms of biological role, transcription factor that plays a role in the activation of archaeal genes transcribed by RNA polymerase. Facilitates transcription initiation by enhancing TATA-box recognition by TATA-box-binding protein (Tbp), and transcription factor B (Tfb) and RNA polymerase recruitment. Not absolutely required for transcription in vitro, but particularly important in cases where Tbp or Tfb function is not optimal. It dynamically alters the nucleic acid-binding properties of RNA polymerases by stabilizing the initiation complex and destabilizing elongation complexes. Seems to translocate with the RNA polymerase following initiation and acts by binding to the non template strand of the transcription bubble in elongation complexes. This Methanococcoides burtonii (strain DSM 6242 / NBRC 107633 / OCM 468 / ACE-M) protein is Transcription factor E.